The following is a 366-amino-acid chain: Ribosomal RNA large subunit methyltransferase M (366 aa).

S-adenosyl-L-methionine contacts are provided by residues Ser-188, 221–224 (CPGG), Asp-240, Asp-260, and Asp-277. Residue Lys-306 is the Proton acceptor of the active site.

The protein belongs to the class I-like SAM-binding methyltransferase superfamily. RNA methyltransferase RlmE family. RlmM subfamily. Monomer.

It localises to the cytoplasm. It carries out the reaction cytidine(2498) in 23S rRNA + S-adenosyl-L-methionine = 2'-O-methylcytidine(2498) in 23S rRNA + S-adenosyl-L-homocysteine + H(+). Catalyzes the 2'-O-methylation at nucleotide C2498 in 23S rRNA. This Salmonella agona (strain SL483) protein is Ribosomal RNA large subunit methyltransferase M.